The sequence spans 376 residues: Alkanesulfonate monooxygenase (376 aa).

Belongs to the SsuD family.

The catalysed reaction is an alkanesulfonate + FMNH2 + O2 = an aldehyde + FMN + sulfite + H2O + 2 H(+). In terms of biological role, catalyzes the desulfonation of aliphatic sulfonates. The sequence is that of Alkanesulfonate monooxygenase from Bacillus licheniformis (strain ATCC 14580 / DSM 13 / JCM 2505 / CCUG 7422 / NBRC 12200 / NCIMB 9375 / NCTC 10341 / NRRL NRS-1264 / Gibson 46).